Reading from the N-terminus, the 310-residue chain is p-hydroxybenzoic acid efflux pump subunit AaeA (310 aa).

Residues 12-32 form a helical membrane-spanning segment; that stretch reads AITLVLVILAFIAIFRAWVYY.

It belongs to the membrane fusion protein (MFP) (TC 8.A.1) family.

It localises to the cell inner membrane. Its function is as follows. Forms an efflux pump with AaeB. The chain is p-hydroxybenzoic acid efflux pump subunit AaeA from Citrobacter koseri (strain ATCC BAA-895 / CDC 4225-83 / SGSC4696).